The chain runs to 311 residues: Ribonuclease Z (311 aa).

Zn(2+) contacts are provided by H63, H65, D67, H68, H141, D212, and H270. D67 acts as the Proton acceptor in catalysis.

Belongs to the RNase Z family. Homodimer. Requires Zn(2+) as cofactor.

The catalysed reaction is Endonucleolytic cleavage of RNA, removing extra 3' nucleotides from tRNA precursor, generating 3' termini of tRNAs. A 3'-hydroxy group is left at the tRNA terminus and a 5'-phosphoryl group is left at the trailer molecule.. Its function is as follows. Zinc phosphodiesterase, which displays some tRNA 3'-processing endonuclease activity. Probably involved in tRNA maturation, by removing a 3'-trailer from precursor tRNA. In Lactiplantibacillus plantarum (strain ATCC BAA-793 / NCIMB 8826 / WCFS1) (Lactobacillus plantarum), this protein is Ribonuclease Z.